The chain runs to 593 residues: MAKESTIRTPIVCVMGHVDHGKTSLLDRIRGSSVVSTEEGEITQHIGATLVPIDAVTRMGGALSKVSVNVPGLLFIDTPGHHAFTTLRARGGALADMAIVVVDINEGFRPQTIEALQILRNYKTPFVIAANKVDRIHGWRVQENQPFLKTFAQQNERVQGMVETKVYELVGKLSDLGFNSERFDRVSDFARNICIVPTSALTGEGLPDILMVLIGLAQRYMTESLKVSADGPGAGTVLEVKEERGLGMTLDLILYDGTLKVGDEIVVAGNDQIIETKVRSLLKPRPMSEILIEERFERVKSVTAAAGIKVAAPKLDGVIAGSPLRAVRSGNRDEVIEQVRREVQDIEVNLSDVGVIIRADTIGALEALSKELEGHQIQVMRATVGPVTRHDVIEAGTIKDPLYSAIIAFNTPVLPDAVDALADTAMSHVSIFEGGVIYQLIDDYVEWRDEKKQELERQKFEKLIMPAKIRILPNCVFRQSNPAVVGVRILGGKLQSGVDLALPNGKKIGRIKQIQAKNETVQEAEAGKEVAISIEGPTVGRQINVDDDLYVDIPERHVKVIEREVIDHLSPSLRETLEEFTTLKRREDPFWGK.

Positions Ile7–Met221 constitute a tr-type G domain. Residues Gly16–Thr23 form a G1 region. Gly16–Thr23 serves as a coordination point for GTP. A G2 region spans residues Glu41–His45. Positions Asp77–Gly80 are G3. Residues Asp77–His81 and Asn131–Asp134 each bind GTP. A G4 region spans residues Asn131–Asp134. Positions Ser199 to Leu201 are G5.

This sequence belongs to the TRAFAC class translation factor GTPase superfamily. Classic translation factor GTPase family. IF-2 subfamily.

Function in general translation initiation by promoting the binding of the formylmethionine-tRNA to ribosomes. Seems to function along with eIF-2. This chain is Probable translation initiation factor IF-2, found in Methanoculleus marisnigri (strain ATCC 35101 / DSM 1498 / JR1).